The primary structure comprises 406 residues: Peptidase T (406 aa).

Residue His82 coordinates Zn(2+). Asp84 is a catalytic residue. Residue Asp142 coordinates Zn(2+). Residue Glu176 is the Proton acceptor of the active site. Positions 177, 199, and 381 each coordinate Zn(2+).

Belongs to the peptidase M20B family. Zn(2+) serves as cofactor.

Its subcellular location is the cytoplasm. The catalysed reaction is Release of the N-terminal residue from a tripeptide.. Cleaves the N-terminal amino acid of tripeptides. This chain is Peptidase T, found in Streptococcus agalactiae serotype Ia (strain ATCC 27591 / A909 / CDC SS700).